Consider the following 364-residue polypeptide: Dihydroorotase (364 aa).

Zn(2+) is bound by residues histidine 14, histidine 16, lysine 98, histidine 137, histidine 180, and aspartate 258. The residue at position 98 (lysine 98) is an N6-carboxylysine.

The protein belongs to the metallo-dependent hydrolases superfamily. DHOase family. Class II DHOase subfamily. Requires Zn(2+) as cofactor.

The catalysed reaction is (S)-dihydroorotate + H2O = N-carbamoyl-L-aspartate + H(+). Its pathway is pyrimidine metabolism; UMP biosynthesis via de novo pathway; (S)-dihydroorotate from bicarbonate: step 3/3. In terms of biological role, catalyzes the conversion of ureidosuccinic acid (USA) to dihydroorotate, the third step of the de novo pyrimidine biosynthetic pathway. This chain is Dihydroorotase (URA4), found in Saccharomyces cerevisiae (strain ATCC 204508 / S288c) (Baker's yeast).